The primary structure comprises 1112 residues: Phytochrome E (1112 aa).

The segment at 1–20 (MGFESSSSAASNMKPQPQKS) is disordered. The GAF domain maps to 217–387 (DIGALCDTVV…AFGLQLQMEL (171 aa)). Cys-322 is a phytochromobilin binding site. PAS domains follow at residues 595–666 (FVCE…LQGE) and 732–803 (DYKT…LISL). Positions 877 to 1096 (YVRQEIKNPL…FFQVDLQVKT (220 aa)) constitute a Histidine kinase domain.

It belongs to the phytochrome family. As to quaternary structure, homodimer. In terms of processing, contains one covalently linked phytochromobilin chromophore.

Functionally, regulatory photoreceptor which exists in two forms that are reversibly interconvertible by light: the Pr form that absorbs maximally in the red region of the spectrum and the Pfr form that absorbs maximally in the far-red region. Photoconversion of Pr to Pfr induces an array of morphogenic responses, whereas reconversion of Pfr to Pr cancels the induction of those responses. Pfr controls the expression of a number of nuclear genes including those encoding the small subunit of ribulose-bisphosphate carboxylase, chlorophyll A/B binding protein, protochlorophyllide reductase, rRNA, etc. It also controls the expression of its own gene(s) in a negative feedback fashion. This Arabidopsis thaliana (Mouse-ear cress) protein is Phytochrome E (PHYE).